The chain runs to 287 residues: uncharacterized protein (287 aa).

This is an uncharacterized protein from Mycoplasma genitalium (strain ATCC 33530 / DSM 19775 / NCTC 10195 / G37) (Mycoplasmoides genitalium).